The chain runs to 123 residues: Fluoride-specific ion channel FluC (123 aa).

Helical transmembrane passes span 6–26 (VALVLIGGGTGAVARYYLSGV), 38–58 (LLVNSLASFLLGYLYGLIFWG), 68–88 (FLGTGFCGGLSTFSTFSYETF), and 100–120 (LLNIFANVLATIFLVFLGFVL). Gly-75 and Ser-78 together coordinate Na(+).

It belongs to the fluoride channel Fluc/FEX (TC 1.A.43) family.

The protein resides in the cell membrane. It carries out the reaction fluoride(in) = fluoride(out). With respect to regulation, na(+) is not transported, but it plays an essential structural role and its presence is essential for fluoride channel function. Fluoride-specific ion channel. Important for reducing fluoride concentration in the cell, thus reducing its toxicity. The sequence is that of Fluoride-specific ion channel FluC from Pyrococcus furiosus (strain ATCC 43587 / DSM 3638 / JCM 8422 / Vc1).